A 195-amino-acid chain; its full sequence is dITP/XTP pyrophosphatase (195 aa).

9–14 (TNNQGK) lines the substrate pocket. The Mg(2+) site is built by Glu-39 and Asp-68. Residue Asp-68 is the Proton acceptor of the active site. Residues Ser-69, 146–149 (FGYD), Lys-169, and 174–175 (HR) contribute to the substrate site.

It belongs to the HAM1 NTPase family. As to quaternary structure, homodimer. It depends on Mg(2+) as a cofactor.

It catalyses the reaction XTP + H2O = XMP + diphosphate + H(+). The catalysed reaction is dITP + H2O = dIMP + diphosphate + H(+). It carries out the reaction ITP + H2O = IMP + diphosphate + H(+). In terms of biological role, pyrophosphatase that catalyzes the hydrolysis of nucleoside triphosphates to their monophosphate derivatives, with a high preference for the non-canonical purine nucleotides XTP (xanthosine triphosphate), dITP (deoxyinosine triphosphate) and ITP. Seems to function as a house-cleaning enzyme that removes non-canonical purine nucleotides from the nucleotide pool, thus preventing their incorporation into DNA/RNA and avoiding chromosomal lesions. The polypeptide is dITP/XTP pyrophosphatase (Gloeobacter violaceus (strain ATCC 29082 / PCC 7421)).